Here is a 1722-residue protein sequence, read N- to C-terminus: Leucine-rich repeat- and IQ domain-containing protein 1 (1722 aa).

4 disordered regions span residues S23–V47, E182–E202, R265–N285, and Q319–K367. Over residues Q38–V47 the composition is skewed to acidic residues. A compositionally biased stretch (basic and acidic residues) spans R265–S278. Positions Q283–E312 constitute an IQ 1 domain. LRR repeat units follow at residues N819–K840, K841–E861, N862–T883, N884–E905, N970–P991, T992–G1013, L1014–V1035, L1036–W1057, L1060–V1081, and S1082–F1103. The region spanning N1117–Q1157 is the LRRCT domain. IQ domains follow at residues K1335–A1364 and R1395–N1424. Polar residues predominate over residues S1506–P1524. A disordered region spans residues S1506 to L1534.

In Homo sapiens (Human), this protein is Leucine-rich repeat- and IQ domain-containing protein 1 (LRRIQ1).